A 154-amino-acid chain; its full sequence is Transcriptional repressor NrdR (154 aa).

A zinc finger lies at 3–34; it reads CPFCNAPDTKVIDSRLATEGAQVRRRRECMSC. One can recognise an ATP-cone domain in the interval 49–139; that stretch reads PRVIKSDGNR…VYRSFQDVNA (91 aa).

The protein belongs to the NrdR family. Zn(2+) serves as cofactor.

Negatively regulates transcription of bacterial ribonucleotide reductase nrd genes and operons by binding to NrdR-boxes. The polypeptide is Transcriptional repressor NrdR (Hydrogenovibrio crunogenus (strain DSM 25203 / XCL-2) (Thiomicrospira crunogena)).